A 292-amino-acid chain; its full sequence is Probable starch degradation products transport system permease protein AmyD (292 aa).

Transmembrane regions (helical) follow at residues 15–35 (WLFIAPTLLSLIIVVLIPFII), 77–97 (FAVACIVIINVVGLSLAMLVT), 110–130 (FYLPNLIGGLILGFIWNFIFV), 156–176 (FWGLVIVTSWQMIGYVMVIYI), 205–225 (VFPLIAPAFTVSLFITLSNSF), and 260–280 (MAVGQAKAVIMFLIIAVISVI). The region spanning 71–281 (IIFTAKFAVA…LIIAVISVIQ (211 aa)) is the ABC transmembrane type-1 domain.

It belongs to the binding-protein-dependent transport system permease family. MalFG subfamily.

Its subcellular location is the cell membrane. Its function is as follows. Probably part of a binding-protein-dependent transport system starch degradation products. Probably responsible for the translocation of the substrate across the membrane. The polypeptide is Probable starch degradation products transport system permease protein AmyD (amyD) (Thermoanaerobacterium thermosulfurigenes (Clostridium thermosulfurogenes)).